Here is a 448-residue protein sequence, read N- to C-terminus: Dual specificity mitogen-activated protein kinase kinase 5 (448 aa).

The interval V18–N25 is interaction with MAPK7. One can recognise a PB1 domain in the interval V18–C109. The interaction with MAP3K2/MAP3K3 stretch occupies residues D64–D68. The tract at residues N116–S144 is disordered. The interaction with MAPK7 stretch occupies residues I117 to H131. Residues A126–S144 are compositionally biased toward polar residues. The Protein kinase domain maps to I166 to I419. Residues L172–V180 and K195 each bind ATP. D283 functions as the Proton acceptor in the catalytic mechanism. S311 is subject to Phosphoserine. Phosphothreonine is present on T315.

The protein belongs to the protein kinase superfamily. STE Ser/Thr protein kinase family. MAP kinase kinase subfamily. In terms of assembly, interacts with PARD6A, MAP3K3 and MAPK7. Forms a complex with SQSTM1 and PRKCZ or PRKCI. It depends on Mg(2+) as a cofactor. Activated by phosphorylation on Ser/Thr by MAP kinase kinase kinases.

The protein localises to the cytoplasm. It carries out the reaction L-seryl-[protein] + ATP = O-phospho-L-seryl-[protein] + ADP + H(+). The catalysed reaction is L-threonyl-[protein] + ATP = O-phospho-L-threonyl-[protein] + ADP + H(+). It catalyses the reaction L-tyrosyl-[protein] + ATP = O-phospho-L-tyrosyl-[protein] + ADP + H(+). In terms of biological role, acts as a scaffold for the formation of a ternary MAP3K2/MAP3K3-MAP3K5-MAPK7 signaling complex. Activation of this pathway appears to play a critical role in protecting cells from stress-induced apoptosis, neuronal survival and cardiac development and angiogenesis. As part of the MAPK/ERK signaling pathway, acts as a negative regulator of apoptosis in cardiomyocytes via promotion of STUB1/CHIP-mediated ubiquitination and degradation of ICER-type isoforms of CREM. In Mus musculus (Mouse), this protein is Dual specificity mitogen-activated protein kinase kinase 5 (Map2k5).